A 318-amino-acid chain; its full sequence is NLP effector protein 9 (318 aa).

The signal sequence occupies residues 1 to 19; it reads MRLFAFLWSSVAFLSTVQA. Positions 24–35 are enriched in low complexity; that stretch reads TASQTQDDSSTP. Disordered regions lie at residues 24–43 and 50–93; these read TASQ…PDKY and LRTK…PAPT. Polar residues predominate over residues 55–65; that stretch reads PMATPNRTIMP. An N-linked (GlcNAc...) asparagine glycan is attached at Asn60. The span at 73 to 93 shows a compositional bias: pro residues; the sequence is PEPPTPEPTYLPTLSPTPAPT. The Conserved undecapeptide motif I signature appears at 185–195; sequence AIMYSWYFPKD. The Hepta-peptide GHRHDWE motif II signature appears at 202–208; it reads GHRHDWE.

Belongs to the Necrosis inducing protein (NPP1) family.

It localises to the secreted. Secreted effector that contributes to virulence during infection by P.capsici. Induces distinct chlorosis at 3 days after inoculation of host C.annuum leaves, and all the chlorotic areas gradually turn brown and become moderately necrotic at 7 days after inoculation. Caused only small necrotic areas at 7 days after non-host N.benthamiana leaves infection. The sequence is that of NLP effector protein 9 from Phytophthora capsici.